The chain runs to 451 residues: Phosphoglucosamine mutase (451 aa).

Ser-101 (phosphoserine intermediate) is an active-site residue. 4 residues coordinate Mg(2+): Ser-101, Asp-240, Asp-242, and Asp-244. Ser-101 carries the phosphoserine modification.

The protein belongs to the phosphohexose mutase family. Requires Mg(2+) as cofactor. Post-translationally, activated by phosphorylation.

It carries out the reaction alpha-D-glucosamine 1-phosphate = D-glucosamine 6-phosphate. Catalyzes the conversion of glucosamine-6-phosphate to glucosamine-1-phosphate. The polypeptide is Phosphoglucosamine mutase (Streptococcus pyogenes serotype M3 (strain SSI-1)).